The primary structure comprises 503 residues: Cytochrome P450 3A7 (503 aa).

C442 serves as a coordination point for heme.

It belongs to the cytochrome P450 family. It depends on heme as a cofactor. In terms of tissue distribution, expressed in fetal liver (at protein level).

It is found in the endoplasmic reticulum membrane. Its subcellular location is the microsome membrane. The catalysed reaction is an organic molecule + reduced [NADPH--hemoprotein reductase] + O2 = an alcohol + oxidized [NADPH--hemoprotein reductase] + H2O + H(+). It carries out the reaction 3beta-hydroxyandrost-5-en-17-one + reduced [NADPH--hemoprotein reductase] + O2 = 3beta,16alpha-dihydroxy-androst-5-en-17-one + oxidized [NADPH--hemoprotein reductase] + H2O + H(+). It catalyses the reaction dehydroepiandrosterone 3-sulfate + reduced [NADPH--hemoprotein reductase] + O2 = 16alpha-hydroxydehydroepiandrosterone 3-sulfate + oxidized [NADPH--hemoprotein reductase] + H2O + H(+). The enzyme catalyses testosterone + reduced [NADPH--hemoprotein reductase] + O2 = 6beta,17beta-dihydroxyandrost-4-en-3-one + oxidized [NADPH--hemoprotein reductase] + H2O + H(+). The catalysed reaction is estrone + reduced [NADPH--hemoprotein reductase] + O2 = 2-hydroxyestrone + oxidized [NADPH--hemoprotein reductase] + H2O + H(+). It carries out the reaction estrone + reduced [NADPH--hemoprotein reductase] + O2 = 4-hydroxyestrone + oxidized [NADPH--hemoprotein reductase] + H2O + H(+). It catalyses the reaction estrone + reduced [NADPH--hemoprotein reductase] + O2 = 16alpha-hydroxyestrone + oxidized [NADPH--hemoprotein reductase] + H2O + H(+). The enzyme catalyses 17beta-estradiol + reduced [NADPH--hemoprotein reductase] + O2 = 2-hydroxy-17beta-estradiol + oxidized [NADPH--hemoprotein reductase] + H2O + H(+). The catalysed reaction is 17beta-estradiol + reduced [NADPH--hemoprotein reductase] + O2 = 6beta-hydroxyestradiol-17beta + oxidized [NADPH--hemoprotein reductase] + H2O + H(+). It carries out the reaction all-trans-retinoate + reduced [NADPH--hemoprotein reductase] + O2 = all-trans-4-hydroxyretinoate + oxidized [NADPH--hemoprotein reductase] + H2O + H(+). It catalyses the reaction all-trans-retinoate + reduced [NADPH--hemoprotein reductase] + O2 = all-trans-18-hydroxyretinoate + oxidized [NADPH--hemoprotein reductase] + H2O + H(+). The protein operates within steroid hormone biosynthesis. Its pathway is cofactor metabolism; retinol metabolism. Its function is as follows. A cytochrome P450 monooxygenase involved in the metabolism of steroid hormones and vitamins during embryogenesis. Mechanistically, uses molecular oxygen inserting one oxygen atom into a substrate, and reducing the second into a water molecule, with two electrons provided by NADPH via cytochrome P450 reductase (NADPH--hemoprotein reductase). Catalyzes the hydroxylation of carbon-hydrogen bonds. Metabolizes 3beta-hydroxyandrost-5-en-17-one (dehydroepiandrosterone, DHEA), a precursor in the biosynthesis of androgen and estrogen steroid hormones. Exhibits high catalytic activity for the formation of hydroxyestrogens from estrone (E1), particularly D-ring hydroxylated estrone at the C16-alpha position. Mainly hydroxylates all trans-retinoic acid (atRA) to 4-hydroxyretinoate and may play a role in atRA clearance during fetal development. Also involved in the oxidative metabolism of xenobiotics including anticonvulsants. This is Cytochrome P450 3A7 from Homo sapiens (Human).